We begin with the raw amino-acid sequence, 347 residues long: Quinolinate synthase (347 aa).

Residues His-47 and Ser-68 each coordinate iminosuccinate. Cys-113 lines the [4Fe-4S] cluster pocket. Residues 139 to 141 and Ser-156 contribute to the iminosuccinate site; that span reads YAN. Cys-200 lines the [4Fe-4S] cluster pocket. Iminosuccinate is bound by residues 226–228 and Thr-243; that span reads HPE. Residue Cys-297 participates in [4Fe-4S] cluster binding.

Belongs to the quinolinate synthase family. Type 1 subfamily. It depends on [4Fe-4S] cluster as a cofactor.

The protein resides in the cytoplasm. It carries out the reaction iminosuccinate + dihydroxyacetone phosphate = quinolinate + phosphate + 2 H2O + H(+). It functions in the pathway cofactor biosynthesis; NAD(+) biosynthesis; quinolinate from iminoaspartate: step 1/1. Catalyzes the condensation of iminoaspartate with dihydroxyacetone phosphate to form quinolinate. This is Quinolinate synthase from Salmonella enteritidis PT4 (strain P125109).